A 426-amino-acid chain; its full sequence is 3-phosphoshikimate 1-carboxyvinyltransferase (426 aa).

Positions 22, 23, and 27 each coordinate 3-phosphoshikimate. Lysine 22 provides a ligand contact to phosphoenolpyruvate. 2 residues coordinate phosphoenolpyruvate: glycine 96 and arginine 124. 3-phosphoshikimate-binding residues include serine 170, serine 171, glutamine 172, serine 198, aspartate 314, asparagine 337, and lysine 341. Glutamine 172 is a binding site for phosphoenolpyruvate. Aspartate 314 serves as the catalytic Proton acceptor. Residues arginine 345, arginine 387, and lysine 412 each coordinate phosphoenolpyruvate.

It belongs to the EPSP synthase family. As to quaternary structure, monomer.

It is found in the cytoplasm. It catalyses the reaction 3-phosphoshikimate + phosphoenolpyruvate = 5-O-(1-carboxyvinyl)-3-phosphoshikimate + phosphate. It participates in metabolic intermediate biosynthesis; chorismate biosynthesis; chorismate from D-erythrose 4-phosphate and phosphoenolpyruvate: step 6/7. In terms of biological role, catalyzes the transfer of the enolpyruvyl moiety of phosphoenolpyruvate (PEP) to the 5-hydroxyl of shikimate-3-phosphate (S3P) to produce enolpyruvyl shikimate-3-phosphate and inorganic phosphate. The sequence is that of 3-phosphoshikimate 1-carboxyvinyltransferase from Shewanella sp. (strain W3-18-1).